We begin with the raw amino-acid sequence, 157 residues long: Small ribosomal subunit protein bS16 (157 aa).

A disordered region spans residues 114–157; sequence NEGPTAEAITEKKKKAKEEAAAKAAAEAEAAAKAEEAPAEEAAE.

The protein belongs to the bacterial ribosomal protein bS16 family.

This Corynebacterium diphtheriae (strain ATCC 700971 / NCTC 13129 / Biotype gravis) protein is Small ribosomal subunit protein bS16.